Reading from the N-terminus, the 92-residue chain is Transcription factor PRE4 (92 aa).

The 56-residue stretch at 5–60 (KSRSRQTGASMITDEQINDLVLQLHRLLPELANNRRSGKVSASRVLQETCSYIRNL) folds into the bHLH domain.

It belongs to the bHLH protein family. In terms of assembly, interacts with HFR1 and IBH1. As to expression, expressed in roots, leaves, stems and flowers.

The protein localises to the nucleus. Functionally, atypical and probable non DNA-binding bHLH transcription factor that integrates multiple signaling pathways to regulate cell elongation and plant development. Regulates light responses by binding and inhibiting the activity of the bHLH transcription factor HFR1, a critical regulator of light signaling and shade avoidance. May have a regulatory role in various aspects of gibberellin-dependent growth and development. In Arabidopsis thaliana (Mouse-ear cress), this protein is Transcription factor PRE4 (PRE4).